Consider the following 406-residue polypeptide: Probable transcription factor FPSE_09188 (406 aa).

Residues 1-72 (MELPTYAVSQ…PKGSSSRCNG (72 aa)) form a disordered region. Low complexity predominate over residues 7–20 (AVSQSLLASRSVSS).

This sequence belongs to the bZIP family.

The protein localises to the nucleus. Functionally, the two putative transcription factors FPSE_09188 and FPSE_09189 could be responsible for orchestrating expression of the W493 A and B biosynthesis cluster genes. W493 A and B consist of six amino acid residues D-allo-thr, L-Ala, D-Ala, L-Gln, D-Tyr, and L-Val/L-Ile linked to a 3-hydroxy-4-methyltetradecanoic acid polyketide chain. The polypeptide is Probable transcription factor FPSE_09188 (Fusarium pseudograminearum (strain CS3096) (Wheat and barley crown-rot fungus)).